A 708-amino-acid chain; its full sequence is DNA ligase (708 aa).

NAD(+) contacts are provided by residues 35–39 (DADYD), 84–85 (SL), and glutamate 118. Lysine 120 functions as the N6-AMP-lysine intermediate in the catalytic mechanism. Positions 141, 182, 303, and 327 each coordinate NAD(+). Positions 419, 422, 437, and 443 each coordinate Zn(2+). A BRCT domain is found at 628–708 (TRASEVSGKT…GWAKIVADAQ (81 aa)).

Belongs to the NAD-dependent DNA ligase family. LigA subfamily. The cofactor is Mg(2+). Mn(2+) is required as a cofactor.

The catalysed reaction is NAD(+) + (deoxyribonucleotide)n-3'-hydroxyl + 5'-phospho-(deoxyribonucleotide)m = (deoxyribonucleotide)n+m + AMP + beta-nicotinamide D-nucleotide.. Its function is as follows. DNA ligase that catalyzes the formation of phosphodiester linkages between 5'-phosphoryl and 3'-hydroxyl groups in double-stranded DNA using NAD as a coenzyme and as the energy source for the reaction. It is essential for DNA replication and repair of damaged DNA. This is DNA ligase from Rhizorhabdus wittichii (strain DSM 6014 / CCUG 31198 / JCM 15750 / NBRC 105917 / EY 4224 / RW1) (Sphingomonas wittichii).